Here is a 467-residue protein sequence, read N- to C-terminus: Methylenetetrahydrofolate--tRNA-(uracil-5-)-methyltransferase TrmFO (467 aa).

Residue 11 to 16 participates in FAD binding; it reads GAGLAG.

Belongs to the MnmG family. TrmFO subfamily. It depends on FAD as a cofactor.

The protein localises to the cytoplasm. The enzyme catalyses uridine(54) in tRNA + (6R)-5,10-methylene-5,6,7,8-tetrahydrofolate + NADH + H(+) = 5-methyluridine(54) in tRNA + (6S)-5,6,7,8-tetrahydrofolate + NAD(+). It carries out the reaction uridine(54) in tRNA + (6R)-5,10-methylene-5,6,7,8-tetrahydrofolate + NADPH + H(+) = 5-methyluridine(54) in tRNA + (6S)-5,6,7,8-tetrahydrofolate + NADP(+). In terms of biological role, catalyzes the folate-dependent formation of 5-methyl-uridine at position 54 (M-5-U54) in all tRNAs. In Prochlorococcus marinus (strain MIT 9303), this protein is Methylenetetrahydrofolate--tRNA-(uracil-5-)-methyltransferase TrmFO.